A 739-amino-acid polypeptide reads, in one-letter code: Phosphoribosylformylglycinamidine synthase subunit PurL (739 aa).

The active site involves H54. Residues Y57 and K96 each coordinate ATP. E98 lines the Mg(2+) pocket. Residues 99–102 (SHNH) and R121 each bind substrate. Catalysis depends on H100, which acts as the Proton acceptor. D122 provides a ligand contact to Mg(2+). Q245 is a substrate binding site. D273 contacts Mg(2+). Position 317–319 (317–319 (ESQ)) interacts with substrate. ATP is bound by residues D500 and G537. A Mg(2+)-binding site is contributed by N538. S540 contributes to the substrate binding site.

Belongs to the FGAMS family. In terms of assembly, monomer. Part of the FGAM synthase complex composed of 1 PurL, 1 PurQ and 2 PurS subunits.

Its subcellular location is the cytoplasm. The enzyme catalyses N(2)-formyl-N(1)-(5-phospho-beta-D-ribosyl)glycinamide + L-glutamine + ATP + H2O = 2-formamido-N(1)-(5-O-phospho-beta-D-ribosyl)acetamidine + L-glutamate + ADP + phosphate + H(+). It participates in purine metabolism; IMP biosynthesis via de novo pathway; 5-amino-1-(5-phospho-D-ribosyl)imidazole from N(2)-formyl-N(1)-(5-phospho-D-ribosyl)glycinamide: step 1/2. Part of the phosphoribosylformylglycinamidine synthase complex involved in the purines biosynthetic pathway. Catalyzes the ATP-dependent conversion of formylglycinamide ribonucleotide (FGAR) and glutamine to yield formylglycinamidine ribonucleotide (FGAM) and glutamate. The FGAM synthase complex is composed of three subunits. PurQ produces an ammonia molecule by converting glutamine to glutamate. PurL transfers the ammonia molecule to FGAR to form FGAM in an ATP-dependent manner. PurS interacts with PurQ and PurL and is thought to assist in the transfer of the ammonia molecule from PurQ to PurL. The polypeptide is Phosphoribosylformylglycinamidine synthase subunit PurL (Bacillus cereus (strain G9842)).